A 459-amino-acid polypeptide reads, in one-letter code: O-phospho-L-seryl-tRNA:Cys-tRNA synthase 1 (459 aa).

Pyridoxal 5'-phosphate contacts are provided by residues alanine 152–arginine 153, asparagine 257, and serine 280–histidine 282. Lysine 283 is modified (N6-(pyridoxal phosphate)lysine).

Belongs to the SepCysS family. As to quaternary structure, homodimer. Interacts with SepRS. Pyridoxal 5'-phosphate serves as cofactor.

It catalyses the reaction O-phospho-L-seryl-tRNA(Cys) + hydrogen sulfide + H(+) = L-cysteinyl-tRNA(Cys) + phosphate. Functionally, converts O-phospho-L-seryl-tRNA(Cys) (Sep-tRNA(Cys)) to L-cysteinyl-tRNA(Cys) (Cys-tRNA(Cys)). This is O-phospho-L-seryl-tRNA:Cys-tRNA synthase 1 from Methanococcoides burtonii (strain DSM 6242 / NBRC 107633 / OCM 468 / ACE-M).